Reading from the N-terminus, the 434-residue chain is Adenylosuccinate synthetase (434 aa).

Residues 22–28 (GDEGKGK) and 50–52 (GHT) contribute to the GTP site. Asp23 (proton acceptor) is an active-site residue. The Mg(2+) site is built by Asp23 and Gly50. Residues 23 to 26 (DEGK), 48 to 51 (NAGH), Thr139, Arg153, Gln234, Thr249, and Arg313 contribute to the IMP site. His51 (proton donor) is an active-site residue. 309-315 (ATTGRKR) provides a ligand contact to substrate. Residues Arg315, 341 to 343 (KLD), and 423 to 425 (SVG) contribute to the GTP site.

The protein belongs to the adenylosuccinate synthetase family. Homodimer. Mg(2+) is required as a cofactor.

It is found in the cytoplasm. It catalyses the reaction IMP + L-aspartate + GTP = N(6)-(1,2-dicarboxyethyl)-AMP + GDP + phosphate + 2 H(+). The protein operates within purine metabolism; AMP biosynthesis via de novo pathway; AMP from IMP: step 1/2. Functionally, plays an important role in the de novo pathway of purine nucleotide biosynthesis. Catalyzes the first committed step in the biosynthesis of AMP from IMP. The polypeptide is Adenylosuccinate synthetase (Pelodictyon phaeoclathratiforme (strain DSM 5477 / BU-1)).